A 229-amino-acid polypeptide reads, in one-letter code: Orotidine 5'-phosphate decarboxylase (229 aa).

Residues Asp-10, Lys-32, Asp-59 to Thr-68, Thr-119, Arg-180, Gln-189, Gly-209, and Arg-210 each bind substrate. Lys-61 serves as the catalytic Proton donor.

Belongs to the OMP decarboxylase family. Type 1 subfamily. As to quaternary structure, homodimer.

The enzyme catalyses orotidine 5'-phosphate + H(+) = UMP + CO2. Its pathway is pyrimidine metabolism; UMP biosynthesis via de novo pathway; UMP from orotate: step 2/2. Its function is as follows. Catalyzes the decarboxylation of orotidine 5'-monophosphate (OMP) to uridine 5'-monophosphate (UMP). The protein is Orotidine 5'-phosphate decarboxylase of Legionella pneumophila (strain Corby).